The sequence spans 247 residues: Caffeoyl-CoA O-methyltransferase (247 aa).

Residue Lys-21 participates in substrate binding. Residues Thr-63, Glu-85, Gly-87–Val-88, Ser-93, Asp-111, and Ala-140 contribute to the S-adenosyl-L-methionine site. Position 163 (Asp-163) interacts with substrate. Asp-163 serves as a coordination point for a divalent metal cation. An S-adenosyl-L-methionine-binding site is contributed by Asp-165. A divalent metal cation-binding residues include Asp-189 and Asn-190. Asn-194 provides a ligand contact to substrate.

It belongs to the class I-like SAM-binding methyltransferase superfamily. Cation-dependent O-methyltransferase family. CCoAMT subfamily. In terms of assembly, homodimer. Ca(2+) is required as a cofactor. It depends on Mg(2+) as a cofactor. The cofactor is Zn(2+).

It catalyses the reaction (E)-caffeoyl-CoA + S-adenosyl-L-methionine = (E)-feruloyl-CoA + S-adenosyl-L-homocysteine + H(+). It participates in aromatic compound metabolism; phenylpropanoid biosynthesis. Functionally, methylates caffeoyl-CoA to feruloyl-CoA and 5-hydroxyferuloyl-CoA to sinapoyl-CoA. Plays a role in the synthesis of feruloylated polysaccharides. Involved in the reinforcement of the plant cell wall. Also involved in the responding to wounding or pathogen challenge by the increased formation of cell wall-bound ferulic acid polymers. The chain is Caffeoyl-CoA O-methyltransferase (CCOMT) from Medicago sativa (Alfalfa).